A 1396-amino-acid polypeptide reads, in one-letter code: DNA-directed RNA polymerase subunit beta' (1396 aa).

Residues C71, C73, C86, and C89 each coordinate Zn(2+). Residues D462, D464, and D466 each coordinate Mg(2+). Residues C810, C884, C891, and C894 each contribute to the Zn(2+) site. Residues 1372–1382 are compositionally biased toward basic and acidic residues; sequence DEQLAQQREDA. The interval 1372–1396 is disordered; it reads DEQLAQQREDAMEPLPAEIALSDAE.

The protein belongs to the RNA polymerase beta' chain family. The RNAP catalytic core consists of 2 alpha, 1 beta, 1 beta' and 1 omega subunit. When a sigma factor is associated with the core the holoenzyme is formed, which can initiate transcription. Mg(2+) serves as cofactor. Zn(2+) is required as a cofactor.

The catalysed reaction is RNA(n) + a ribonucleoside 5'-triphosphate = RNA(n+1) + diphosphate. In terms of biological role, DNA-dependent RNA polymerase catalyzes the transcription of DNA into RNA using the four ribonucleoside triphosphates as substrates. The sequence is that of DNA-directed RNA polymerase subunit beta' from Caulobacter vibrioides (strain ATCC 19089 / CIP 103742 / CB 15) (Caulobacter crescentus).